The primary structure comprises 405 residues: NADH-quinone oxidoreductase subunit D (405 aa).

It belongs to the complex I 49 kDa subunit family. NDH-1 is composed of 14 different subunits. Subunits NuoB, C, D, E, F, and G constitute the peripheral sector of the complex.

The protein localises to the cell inner membrane. It carries out the reaction a quinone + NADH + 5 H(+)(in) = a quinol + NAD(+) + 4 H(+)(out). In terms of biological role, NDH-1 shuttles electrons from NADH, via FMN and iron-sulfur (Fe-S) centers, to quinones in the respiratory chain. The immediate electron acceptor for the enzyme in this species is believed to be ubiquinone. Couples the redox reaction to proton translocation (for every two electrons transferred, four hydrogen ions are translocated across the cytoplasmic membrane), and thus conserves the redox energy in a proton gradient. This Afipia carboxidovorans (strain ATCC 49405 / DSM 1227 / KCTC 32145 / OM5) (Oligotropha carboxidovorans) protein is NADH-quinone oxidoreductase subunit D.